The sequence spans 390 residues: Succinate--CoA ligase [ADP-forming] subunit beta (390 aa).

Positions 9–245 (KHLLKKYNIP…TTQEDEHETM (237 aa)) constitute an ATP-grasp domain. ATP contacts are provided by residues Lys-46, 53 to 55 (GRG), Glu-99, Ser-102, and Glu-107. The Mg(2+) site is built by Asn-200 and Asp-214. Substrate is bound by residues Asn-265 and 322 to 324 (GIV).

Belongs to the succinate/malate CoA ligase beta subunit family. Heterotetramer of two alpha and two beta subunits. Requires Mg(2+) as cofactor.

The enzyme catalyses succinate + ATP + CoA = succinyl-CoA + ADP + phosphate. It catalyses the reaction GTP + succinate + CoA = succinyl-CoA + GDP + phosphate. It functions in the pathway carbohydrate metabolism; tricarboxylic acid cycle; succinate from succinyl-CoA (ligase route): step 1/1. Its function is as follows. Succinyl-CoA synthetase functions in the citric acid cycle (TCA), coupling the hydrolysis of succinyl-CoA to the synthesis of either ATP or GTP and thus represents the only step of substrate-level phosphorylation in the TCA. The beta subunit provides nucleotide specificity of the enzyme and binds the substrate succinate, while the binding sites for coenzyme A and phosphate are found in the alpha subunit. The polypeptide is Succinate--CoA ligase [ADP-forming] subunit beta (Coxiella burnetii (strain Dugway 5J108-111)).